The primary structure comprises 255 residues: PABIR family member 2 (255 aa).

The interval 1-24 is disordered; it reads MAQEKMDLDFEADTSEGATLRRSN. Ala-2 carries the post-translational modification N-acetylalanine. Phosphoserine occurs at positions 25, 33, 50, and 58. The residue at position 112 (Thr-112) is a Phosphothreonine. Ser-115 and Ser-119 each carry phosphoserine. At Arg-122 the chain carries Omega-N-methylarginine. A Phosphoserine modification is found at Ser-145. Disordered stretches follow at residues 169–196 and 219–238; these read LGPL…SMLS and SGLS…SPVA. Residues 174 to 184 show a composition bias toward basic and acidic residues; the sequence is RKGEMEMESQP.

The protein belongs to the FAM122 family.

This is PABIR family member 2 from Mus musculus (Mouse).